Reading from the N-terminus, the 523-residue chain is Alpha,alpha-trehalose-phosphate synthase [UDP-forming] (523 aa).

D-glucose 6-phosphate is bound by residues Tyr-98 and Asp-152. Residues Arg-288 and Lys-293 each contribute to the UDP site. UDP-alpha-D-glucose contacts are provided by Arg-288 and Lys-293. A D-glucose 6-phosphate-binding site is contributed by Arg-326. 387 to 395 (DGMNLVSYE) provides a ligand contact to UDP-alpha-D-glucose. 391–395 (LVSYE) is a UDP binding site. The tract at residues 503-523 (QQFNLGEQREEGRLEPGEFDD) is disordered. A compositionally biased stretch (basic and acidic residues) spans 509 to 523 (EQREEGRLEPGEFDD).

It belongs to the glycosyltransferase 20 family.

The enzyme catalyses D-glucose 6-phosphate + UDP-alpha-D-glucose = alpha,alpha-trehalose 6-phosphate + UDP + H(+). Its pathway is carbohydrate biosynthesis. Synthase catalytic subunit of the trehalose synthase complex that catalyzes the production of trehalose from glucose-6-phosphate and UDP-alpha-D-glucose in a two step process. The disaccharide trehalose serves as a storage carbohydrate that is mobilized during conidial germination. Trehalose also serves as a protectant for cell integrity during stress. This chain is Alpha,alpha-trehalose-phosphate synthase [UDP-forming], found in Botryotinia fuckeliana (strain B05.10) (Noble rot fungus).